A 144-amino-acid polypeptide reads, in one-letter code: Transcriptional regulator SlyA (144 aa).

The region spanning 2 to 135 (ESPLGSDLAR…LLHLIRKLEQ (134 aa)) is the HTH marR-type domain. The segment at residues 49 to 72 (QIQLAKAIGIEQPSLVRTLDQLEE) is a DNA-binding region (H-T-H motif).

Belongs to the SlyA family. In terms of assembly, homodimer.

Functionally, transcription regulator that can specifically activate or repress expression of target genes. The protein is Transcriptional regulator SlyA of Klebsiella pneumoniae (strain 342).